Consider the following 487-residue polypeptide: MILKILNEIASIGSTKQKQAILEKNKDNELLKRVYRLTYSRGLQYYIKKWPKPGIATQSFGMLTLTDMLDFIEFTLATRKLTGNAAIEELTGYITDGKKDDVEVLRRVMMRDLECGASVSIANKVWPGLIPEQPQMLASSYDEKGINKNIKFPAFAQLKADGARCFAEVRGDELDDVRLLSRAGNEYLGLDLLKEELIKMTAEARQIHPEGVLIDGELVYHEQVKKEPEGLDFLFDAYPENSKAKEFAEVAESRTASNGIANKSLKGTISEKEAQCMKFQVWDYVPLVEIYSLPAFRLKYDVRFSKLEQMTSGYDKVILIENQVVNNLDEAKVIYKKYIDQGLEGIILKNIDGLWENARSKNLYKFKEVIDVDLKIVGIYPHRKDPTKAGGFILESECGKIKVNAGSGLKDKAGVKSHELDRTRIMENQNYYIGKILECECNGWLKSDGRTDYVKLFLPIAIRLREDKTKANTFEDVFGDFHEVTGL.

K159 functions as the N6-AMP-lysine intermediate in the catalytic mechanism. ATP-binding residues include R164, R182, and E217. E217 contributes to the a divalent metal cation binding site. The segment at 229 to 237 (EGLDFLFDA) is interaction with the sliding clamp. E344 lines the a divalent metal cation pocket. ATP-binding residues include R359 and K365.

The protein belongs to the ATP-dependent DNA ligase family. Interacts with the sliding clamp. A divalent metal cation is required as a cofactor.

It catalyses the reaction ATP + (deoxyribonucleotide)n-3'-hydroxyl + 5'-phospho-(deoxyribonucleotide)m = (deoxyribonucleotide)n+m + AMP + diphosphate.. Its function is as follows. DNA ligase, which is expressed in the early stage of lytic development, has been implicated in T4 DNA synthesis and genetic recombination. It may also play a role in T4 DNA repair. The sequence is that of DNA ligase (30) from Enterobacteria phage T4 (Bacteriophage T4).